The following is a 916-amino-acid chain: MLTNIAKKIFGSRNDRLLKQYRKSVARINALEEQMQALSDADLQAKTAEFKQRLADGQTLDGILPEAFAVCREASRRTLGMRHFDVQLIGGMVLHDGKIAEMRTGEGKTLVATLAVYLNALAGKGVHVVTVNDYLASRDAGIMEPLYNFLGLTVGVIISDMQPFDRQNAYAADITYGTNNEFGFDYLRDNMVTDQYDKVQRELNFAVVDEVDSILIDEARTPLIISGQADDNIQLYQIMNTVPPHLVRQETEEGEGDYWVDEKAHQVILSEAGHEHAEQILTQMGLLAENDSLYSAANIALMHHLMAALRAHSLFHKDQHYVIQDGEIVIVDEFTGRLMSGRRWSEGLHQAVEAKEGVEIKRENQTLASITFQNYFRLYTKLSGMTGTADTEAFEFQSIYNLETVIIPTNRPVQRKDFNDQIFRSAEEKFEAVVKDIEECHKRGQPVLVGTTSIENSELVSKLLTQAGLPHNVLNAKEHEREALIVAQAGKVGAITVATNMAGRGTDIVLGGNLKHQTDAIRADETLSDEEKQAQIAALEDGWQAEHDKVMEAGGLHIIGTERHESRRIDNQLRGRSGRQGDPGSSRFYLSFEDPLLRLFALDRAAAILNRLAPERGVAIEHNLLTRQIEGAQRKVEGRNFDMRKQVLEYDDVANEQRKVIYSQRNEILTSKDISDLMQEIRSDVVSDLVDTYMPPDSMEEQWDIPTLENRLAAEFRLHEDIQSWLKADNAIDGQDIKERLIERIENEYAAKTELVGKQAMADFERNVMLQVIDNQWREHLAAMDYLRQGIHLRSYAQKNPKQEYKREAFTMFQDLWNGIKFHIASLLTSVQIEQNPVAVVEEQPIGNIQSIHSESPDMEELLGQSQTDLVTEAFNPDGTDFSPEALEARGQIVHRNDPCPCGSGLKYKQCHGKLA.

Residues Gln87, 105 to 109, and Asp507 each bind ATP; that span reads GEGKT. The Zn(2+) site is built by Cys900, Cys902, Cys911, and His912.

The protein belongs to the SecA family. In terms of assembly, monomer and homodimer. Part of the essential Sec protein translocation apparatus which comprises SecA, SecYEG and auxiliary proteins SecDF-YajC and YidC. The cofactor is Zn(2+).

It is found in the cell inner membrane. The protein resides in the cytoplasm. It catalyses the reaction ATP + H2O + cellular proteinSide 1 = ADP + phosphate + cellular proteinSide 2.. Part of the Sec protein translocase complex. Interacts with the SecYEG preprotein conducting channel. Has a central role in coupling the hydrolysis of ATP to the transfer of proteins into and across the cell membrane, serving both as a receptor for the preprotein-SecB complex and as an ATP-driven molecular motor driving the stepwise translocation of polypeptide chains across the membrane. This chain is Protein translocase subunit SecA, found in Neisseria meningitidis serogroup B (strain ATCC BAA-335 / MC58).